Consider the following 463-residue polypeptide: UDP-N-acetylmuramoylalanine--D-glutamate ligase (463 aa).

109-115 contacts ATP; it reads GTDGKST.

Belongs to the MurCDEF family.

Its subcellular location is the cytoplasm. It catalyses the reaction UDP-N-acetyl-alpha-D-muramoyl-L-alanine + D-glutamate + ATP = UDP-N-acetyl-alpha-D-muramoyl-L-alanyl-D-glutamate + ADP + phosphate + H(+). The protein operates within cell wall biogenesis; peptidoglycan biosynthesis. In terms of biological role, cell wall formation. Catalyzes the addition of glutamate to the nucleotide precursor UDP-N-acetylmuramoyl-L-alanine (UMA). The polypeptide is UDP-N-acetylmuramoylalanine--D-glutamate ligase (Leptospira interrogans serogroup Icterohaemorrhagiae serovar Lai (strain 56601)).